Here is a 269-residue protein sequence, read N- to C-terminus: 4-hydroxy-tetrahydrodipicolinate reductase (269 aa).

NAD(+) is bound by residues 8 to 13 (GAAGRM) and Glu34. Arg35 is an NADP(+) binding site. NAD(+)-binding positions include 98-100 (GTT) and 122-125 (APNY). His155 functions as the Proton donor/acceptor in the catalytic mechanism. His156 lines the (S)-2,3,4,5-tetrahydrodipicolinate pocket. Lys159 functions as the Proton donor in the catalytic mechanism. 165–166 (GT) contacts (S)-2,3,4,5-tetrahydrodipicolinate.

Belongs to the DapB family.

It localises to the cytoplasm. It catalyses the reaction (S)-2,3,4,5-tetrahydrodipicolinate + NAD(+) + H2O = (2S,4S)-4-hydroxy-2,3,4,5-tetrahydrodipicolinate + NADH + H(+). It carries out the reaction (S)-2,3,4,5-tetrahydrodipicolinate + NADP(+) + H2O = (2S,4S)-4-hydroxy-2,3,4,5-tetrahydrodipicolinate + NADPH + H(+). It functions in the pathway amino-acid biosynthesis; L-lysine biosynthesis via DAP pathway; (S)-tetrahydrodipicolinate from L-aspartate: step 4/4. In terms of biological role, catalyzes the conversion of 4-hydroxy-tetrahydrodipicolinate (HTPA) to tetrahydrodipicolinate. The protein is 4-hydroxy-tetrahydrodipicolinate reductase of Vibrio parahaemolyticus serotype O3:K6 (strain RIMD 2210633).